We begin with the raw amino-acid sequence, 175 residues long: Translation initiation factor IF-3 (175 aa).

The protein belongs to the IF-3 family. Monomer.

It is found in the cytoplasm. Its function is as follows. IF-3 binds to the 30S ribosomal subunit and shifts the equilibrium between 70S ribosomes and their 50S and 30S subunits in favor of the free subunits, thus enhancing the availability of 30S subunits on which protein synthesis initiation begins. The polypeptide is Translation initiation factor IF-3 (Staphylococcus carnosus (strain TM300)).